The sequence spans 218 residues: Sodium channel regulatory subunit beta-1 (218 aa).

The signal sequence occupies residues 1–18 (MGTLLAFVVGAALVSSAW). Over 19 to 157 (GGCVEVDSET…DKANRDMASI (139 aa)) the chain is Extracellular. Intrachain disulfides connect Cys21–Cys43 and Cys40–Cys121. An Ig-like C2-type domain is found at 22–150 (VEVDSETEAV…KIHLEVVDKA (129 aa)). Asn93, Asn110, Asn114, and Asn135 each carry an N-linked (GlcNAc...) asparagine glycan. Residues 158 to 179 (VSEIMMYVLIVVLTIWLVAEMV) form a helical membrane-spanning segment. Residues 180-218 (YCYKKIAAATEAAAQENASEYLAITSESKENCTGVQVAE) are Cytoplasmic-facing.

Belongs to the sodium channel auxiliary subunit SCN1B (TC 8.A.17) family. A voltage-gated sodium (Nav) channel consists of an ion-conducting pore-forming alpha subunit functional on its own that is regulated by one or more beta subunits. Interacts with SCN1A; regulatory subunit of SCN1A/Nav1.1. Interacts with SCN3A; regulatory subunit of SCN3A/Nav1.3. Interacts with SCN4A; regulatory subunit of SCN4A/Nav1.4. Interacts with SCN5A; regulatory subunit of SCN5A/Nav1.5. Interacts with SCN8A; regulatory subunit of SCN8A/Nav1.6. Interacts with SCN9A; regulatory subunit of SCN9A/Nav1.7. Interacts with SCN10A; regulatory subunit of SCN10A/Nav1.8. Interacts with NFASC. Interacts with TMEM65.

The protein localises to the cell membrane. Its subcellular location is the perikaryon. The protein resides in the cell projection. It localises to the axon. In terms of biological role, regulatory subunit of multiple voltage-gated sodium (Nav) channels directly mediating the depolarization of excitable membranes. Navs, also called VGSCs (voltage-gated sodium channels) or VDSCs (voltage-dependent sodium channels), operate by switching between closed and open conformations depending on the voltage difference across the membrane. In the open conformation they allow Na(+) ions to selectively pass through the pore, along their electrochemical gradient. The influx of Na+ ions provokes membrane depolarization, initiating the propagation of electrical signals throughout cells and tissues. The accessory beta subunits participate in localization and functional modulation of the Nav channels. Modulates the activity of SCN1A/Nav1.1, SCN2A/Nav1.2, SCN3A/Nav1.3, SCN4A/Nav1.4, SCN5A/Nav1.5, SCN8A/Nav1.6, SCN9A/Nav1.7 and SCN10A/Nav1.8. In Bos taurus (Bovine), this protein is Sodium channel regulatory subunit beta-1.